Here is a 459-residue protein sequence, read N- to C-terminus: Nuclear distribution protein nudF 1 (459 aa).

The LisH domain occupies 9–41 (QAEELHKSIIAYLSANNLSNAASALRGELGLSE). The stretch at 61-88 (TSIVRLQKKIMDLEARCGALQTELNNAT) forms a coiled coil. WD repeat units lie at residues 114 to 155 (SHRN…TTLK), 157 to 197 (HTRA…KNIR), 201 to 240 (GHEH…CVKT), 243 to 282 (GHSG…NPEA), 288 to 349 (GHDH…LMTL), 351 to 390 (GHDN…KCVK), 395 to 440 (AHGR…PQVQ), and 442 to 459 (RCVV…IFAN).

The protein belongs to the WD repeat LIS1/nudF family. As to quaternary structure, self-associates. Interacts with nudE and dynein.

The protein localises to the cytoplasm. It localises to the cytoskeleton. It is found in the spindle pole. In terms of biological role, positively regulates the activity of the minus-end directed microtubule motor protein dynein. May enhance dynein-mediated microtubule sliding by targeting dynein to the microtubule plus end. Required for nuclear migration during vegetative growth as well as development. Required for retrograde early endosome (EE) transport from the hyphal tip. Required for localization of dynein to the mitotic spindle poles. Recruits additional proteins to the dynein complex at SPBs. The chain is Nuclear distribution protein nudF 1 from Talaromyces marneffei (strain ATCC 18224 / CBS 334.59 / QM 7333) (Penicillium marneffei).